The primary structure comprises 224 residues: Ribosomal RNA small subunit methyltransferase G (224 aa).

S-adenosyl-L-methionine contacts are provided by residues G89, L94, 140–141, and R154; that span reads IE.

The protein belongs to the methyltransferase superfamily. RNA methyltransferase RsmG family.

The protein localises to the cytoplasm. It carries out the reaction guanosine(527) in 16S rRNA + S-adenosyl-L-methionine = N(7)-methylguanosine(527) in 16S rRNA + S-adenosyl-L-homocysteine. In terms of biological role, specifically methylates the N7 position of guanine in position 527 of 16S rRNA. The sequence is that of Ribosomal RNA small subunit methyltransferase G from Bordetella avium (strain 197N).